The chain runs to 115 residues: UPF0102 protein NMCC_2054 (115 aa).

It belongs to the UPF0102 family.

The sequence is that of UPF0102 protein NMCC_2054 from Neisseria meningitidis serogroup C (strain 053442).